The following is a 203-amino-acid chain: Recombination protein RecR (203 aa).

The C4-type zinc finger occupies 58 to 73 (CDYCGNLDVVSICNIC). The region spanning 81-177 (SIIAIVESVA…KISKLASGIP (97 aa)) is the Toprim domain.

The protein belongs to the RecR family.

May play a role in DNA repair. It seems to be involved in an RecBC-independent recombinational process of DNA repair. It may act with RecF and RecO. This chain is Recombination protein RecR, found in Orientia tsutsugamushi (strain Boryong) (Rickettsia tsutsugamushi).